The chain runs to 460 residues: tRNA-2-methylthio-N(6)-dimethylallyladenosine synthase (460 aa).

The 116-residue stretch at 23-138 folds into the MTTase N-terminal domain; the sequence is RKVYVHTFGC…LPEMVARAER (116 aa). 6 residues coordinate [4Fe-4S] cluster: Cys32, Cys68, Cys101, Cys176, Cys180, and Cys183. One can recognise a Radical SAM core domain in the interval 162 to 394; the sequence is ARGRPTAFVT…QAAQRRIAAA (233 aa). A TRAM domain is found at 397–460; the sequence is AAELGKVVEV…GGSSLSGTPA (64 aa).

The protein belongs to the methylthiotransferase family. MiaB subfamily. Monomer. It depends on [4Fe-4S] cluster as a cofactor.

It is found in the cytoplasm. It catalyses the reaction N(6)-dimethylallyladenosine(37) in tRNA + (sulfur carrier)-SH + AH2 + 2 S-adenosyl-L-methionine = 2-methylsulfanyl-N(6)-dimethylallyladenosine(37) in tRNA + (sulfur carrier)-H + 5'-deoxyadenosine + L-methionine + A + S-adenosyl-L-homocysteine + 2 H(+). Catalyzes the methylthiolation of N6-(dimethylallyl)adenosine (i(6)A), leading to the formation of 2-methylthio-N6-(dimethylallyl)adenosine (ms(2)i(6)A) at position 37 in tRNAs that read codons beginning with uridine. The protein is tRNA-2-methylthio-N(6)-dimethylallyladenosine synthase of Anaeromyxobacter sp. (strain Fw109-5).